We begin with the raw amino-acid sequence, 447 residues long: Asparagine--tRNA ligase (447 aa).

It belongs to the class-II aminoacyl-tRNA synthetase family. As to quaternary structure, homodimer.

Its subcellular location is the cytoplasm. The enzyme catalyses tRNA(Asn) + L-asparagine + ATP = L-asparaginyl-tRNA(Asn) + AMP + diphosphate + H(+). This is Asparagine--tRNA ligase from Lactococcus lactis subsp. lactis (strain IL1403) (Streptococcus lactis).